We begin with the raw amino-acid sequence, 755 residues long: Polyribonucleotide nucleotidyltransferase (755 aa).

2 residues coordinate Mg(2+): D527 and D533. The region spanning 593–652 (PRITTIKVPVDKIGEVIGPKGKMINSITEETGANISIEDDGTVFVGAADGASAQAAIDKI) is the KH domain. Positions 664 to 733 (GERFLGTVVK…NRGKISLVPV (70 aa)) constitute an S1 motif domain. Residues 734–755 (GEEDAAEAPAPAEAQPADAVTQ) are disordered. Over residues 740–755 (EAPAPAEAQPADAVTQ) the composition is skewed to low complexity.

The protein belongs to the polyribonucleotide nucleotidyltransferase family. Requires Mg(2+) as cofactor.

The protein localises to the cytoplasm. The enzyme catalyses RNA(n+1) + phosphate = RNA(n) + a ribonucleoside 5'-diphosphate. Involved in mRNA degradation. Catalyzes the phosphorolysis of single-stranded polyribonucleotides processively in the 3'- to 5'-direction. This is Polyribonucleotide nucleotidyltransferase from Mycobacteroides abscessus (strain ATCC 19977 / DSM 44196 / CCUG 20993 / CIP 104536 / JCM 13569 / NCTC 13031 / TMC 1543 / L948) (Mycobacterium abscessus).